A 546-amino-acid polypeptide reads, in one-letter code: Chaperonin GroEL (546 aa).

ATP is bound by residues 30–33, Lys-51, 87–91, Gly-415, 479–481, and Asp-495; these read TLGP, DGTTT, and NAA. Positions 527 to 546 are disordered; it reads DESAAPAMPGGMGGMGDMGM. Residues 536–546 are compositionally biased toward gly residues; sequence GGMGGMGDMGM.

Belongs to the chaperonin (HSP60) family. Forms a cylinder of 14 subunits composed of two heptameric rings stacked back-to-back. Interacts with the co-chaperonin GroES.

The protein localises to the cytoplasm. The catalysed reaction is ATP + H2O + a folded polypeptide = ADP + phosphate + an unfolded polypeptide.. Functionally, together with its co-chaperonin GroES, plays an essential role in assisting protein folding. The GroEL-GroES system forms a nano-cage that allows encapsulation of the non-native substrate proteins and provides a physical environment optimized to promote and accelerate protein folding. This chain is Chaperonin GroEL, found in Acidovorax ebreus (strain TPSY) (Diaphorobacter sp. (strain TPSY)).